A 475-amino-acid polypeptide reads, in one-letter code: MPPMELGKTKNVHIVGIGGAGMSAIAELLLKSGFAVSGSDLASGEVIDKLRELGAVIHQGHQAENVGASDVVVYSSAVRPESNVEILAAQKLGIPVIKRDEMLGELMRHKSGICVSGTHGKTTTTAMVATMLLEAGQSPTVMIGGVSDYLKGSTVVGEGKSMVIEADEYDRAFLKLTPTIAVLNSLESEHMDTYGTMDNLRDCFAEFANKVPFYGRVICCVDWPEIRRIIPRLNRRYTTFGIEEHADVMASEIEPGDGGSTFTVEAFGERYPGVRLNVPGRHNVLNALAAFSVGLEIGLPPERIIAGLARYSGMRRRFQVKYRGADGVLVIDDYAHHPTEVKATVRAARDGWKEHRIVAVFQPHLYSRTAEFAGEFGWALSRADTVYVAGIYPSREKAEDYPGITGELVAEASRTAGAKNVWFTEEHEALLAALQEEAAPETLFLFMGAGDITHLAARFAAWCTEMRSNADATAS.

Position 117–123 (117–123 (GTHGKTT)) interacts with ATP.

It belongs to the MurCDEF family.

The protein resides in the cytoplasm. The catalysed reaction is UDP-N-acetyl-alpha-D-muramate + L-alanine + ATP = UDP-N-acetyl-alpha-D-muramoyl-L-alanine + ADP + phosphate + H(+). It functions in the pathway cell wall biogenesis; peptidoglycan biosynthesis. Its function is as follows. Cell wall formation. The protein is UDP-N-acetylmuramate--L-alanine ligase of Chlorobaculum tepidum (strain ATCC 49652 / DSM 12025 / NBRC 103806 / TLS) (Chlorobium tepidum).